The chain runs to 154 residues: SsrA-binding protein (154 aa).

The protein belongs to the SmpB family.

It is found in the cytoplasm. Functionally, required for rescue of stalled ribosomes mediated by trans-translation. Binds to transfer-messenger RNA (tmRNA), required for stable association of tmRNA with ribosomes. tmRNA and SmpB together mimic tRNA shape, replacing the anticodon stem-loop with SmpB. tmRNA is encoded by the ssrA gene; the 2 termini fold to resemble tRNA(Ala) and it encodes a 'tag peptide', a short internal open reading frame. During trans-translation Ala-aminoacylated tmRNA acts like a tRNA, entering the A-site of stalled ribosomes, displacing the stalled mRNA. The ribosome then switches to translate the ORF on the tmRNA; the nascent peptide is terminated with the 'tag peptide' encoded by the tmRNA and targeted for degradation. The ribosome is freed to recommence translation, which seems to be the essential function of trans-translation. The sequence is that of SsrA-binding protein from Staphylococcus aureus (strain Mu3 / ATCC 700698).